A 217-amino-acid chain; its full sequence is N-(5'-phosphoribosyl)anthranilate isomerase (217 aa).

This sequence belongs to the TrpF family.

The catalysed reaction is N-(5-phospho-beta-D-ribosyl)anthranilate = 1-(2-carboxyphenylamino)-1-deoxy-D-ribulose 5-phosphate. The protein operates within amino-acid biosynthesis; L-tryptophan biosynthesis; L-tryptophan from chorismate: step 3/5. The sequence is that of N-(5'-phosphoribosyl)anthranilate isomerase from Synechococcus elongatus (strain ATCC 33912 / PCC 7942 / FACHB-805) (Anacystis nidulans R2).